The sequence spans 83 residues: MAGPWTIEPGKNHGGIPTWAWPRSTTVHVQVVGGGRGRVRMQAGASPDEDNDVNGETSFSRSFGGSRLNVTNIGSRTLKVWTA.

The disordered stretch occupies residues 40–65 (RMQAGASPDEDNDVNGETSFSRSFGG). The span at 54–65 (NGETSFSRSFGG) shows a compositional bias: polar residues.

This is an uncharacterized protein from Dictyostelium discoideum (Social amoeba).